A 107-amino-acid polypeptide reads, in one-letter code: Small ribosomal subunit protein uS10c (107 aa).

This sequence belongs to the universal ribosomal protein uS10 family. In terms of assembly, part of the 30S ribosomal subunit.

The protein resides in the plastid. Its subcellular location is the chloroplast. In terms of biological role, involved in the binding of tRNA to the ribosomes. This Phaeodactylum tricornutum (strain CCAP 1055/1) protein is Small ribosomal subunit protein uS10c.